Here is a 173-residue protein sequence, read N- to C-terminus: Alpha-crystallin A chain (173 aa).

Position 1 is an N-acetylmethionine (methionine 1). The segment at 1-63 (MDVTIQHPWF…RTVLDSGISE (63 aa)) is required for complex formation with BFSP1 and BFSP2. Glutamine 6 is subject to Deamidated glutamine; partial. Residue serine 45 is modified to Phosphoserine. Position 50 is a deamidated glutamine; partial (glutamine 50). The sHSP domain maps to 52 to 162 (LFRTVLDSGI…GHSERAIPVS (111 aa)). Lysine 70 carries the post-translational modification N6-acetyllysine. Residue glutamine 90 is modified to Deamidated glutamine; partial. An N6-acetyllysine modification is found at lysine 99. A Zn(2+)-binding site is contributed by histidine 100. Deamidated asparagine; partial is present on asparagine 101. 2 residues coordinate Zn(2+): glutamate 102 and histidine 107. Serine 122 carries the phosphoserine modification. Asparagine 123 carries the deamidated asparagine; partial modification. Positions 145–173 (KVQSGLDAGHSERAIPVSREEKPSSAPSS) are disordered. Glutamine 147 is modified (deamidated glutamine; partial). A compositionally biased stretch (basic and acidic residues) spans 153-167 (GHSERAIPVSREEKP). Histidine 154 is a Zn(2+) binding site. The O-linked (GlcNAc) serine glycan is linked to serine 162.

Belongs to the small heat shock protein (HSP20) family. Heteromer composed of three CRYAA and one CRYAB subunits. Inter-subunit bridging via zinc ions enhances stability, which is crucial as there is no protein turn over in the lens. Can also form homodimers and homotetramers (dimers of dimers) which serve as the building blocks of homooligomers. Within homooligomers, the zinc-binding motif is created from residues of 3 different molecules. His-100 and Glu-102 from one molecule are ligands of the zinc ion, and His-107 and His-154 residues from additional molecules complete the site with tetrahedral coordination geometry. Part of a complex required for lens intermediate filament formation composed of BFSP1, BFSP2 and CRYAA. In terms of processing, acetylation at Lys-70 may increase chaperone activity. Post-translationally, undergoes age-dependent proteolytical cleavage at the C-terminus.

The protein resides in the cytoplasm. Its subcellular location is the nucleus. Functionally, contributes to the transparency and refractive index of the lens. Acts as a chaperone, preventing aggregation of various proteins under a wide range of stress conditions. Required for the correct formation of lens intermediate filaments as part of a complex composed of BFSP1, BFSP2 and CRYAA. This Oryctolagus cuniculus (Rabbit) protein is Alpha-crystallin A chain (CRYAA).